We begin with the raw amino-acid sequence, 295 residues long: Probable phosphoglycerate mutase PMU1 (295 aa).

The active-site Tele-phosphohistidine intermediate is H61. E170 serves as the catalytic Proton donor/acceptor.

This sequence belongs to the phosphoglycerate mutase family.

The protein resides in the cytoplasm. It localises to the nucleus. Functionally, probable phosphomutase that may have a function related to the manipulation of phosphate groups on carbohydrates. Reduces trehalose-6-phosphate levels when overexpressed in TPS2-deleted cells. Reduces 5'-Phosphoribosyl-4-carboxamide-5-aminoimidazole (AICAR) levels, a metabolic intermediate at the crossroads between AMP and histidine biosynthesis pathways, when overexpressed in a ADE3-ADE16-ADE17 triple deletant. This chain is Probable phosphoglycerate mutase PMU1, found in Saccharomyces cerevisiae (strain ATCC 204508 / S288c) (Baker's yeast).